The following is a 444-amino-acid chain: MKRIVVLGAGESGAGAAVLAKVKGFDTFVSDMSAIKDKYKTLLDGHGIAWEEGRHTEEQILSADEVVKSPGIPNDAPLILRLREQGTPIISEIEFAGRYTDAKMICITGSNGKTTTTSLIYHIFKSAGLNVGLAGNIGKSLALQVAEEKHDYYVIELSSFQLDNMYNFRADIAVLMNITPDHLDRYDHCMQNYINAKFRITQNQTSEDAFIFWNDDPIIKRELDKHGIRAHLYPFSAIKEEGSIAYVEDHEVVITEPIAFNMEQEQLALTGQHNLYNSLAAGISANLAGITKEDIRKALSDFQGVEHRLEKVARVRGIDFINDSKATNVNSCWYALQSMTTKTVLILGGKDKGNDYTEIEELVREKCSALVYLGLHNEKLHEFFDRLGLPVAEVQTGMKDAVEAAYKLAKKGETVLLSPCCASFDLFKSYEDRGEQFKKYVREL.

ATP is bound at residue 109–115; it reads GSNGKTT.

This sequence belongs to the MurCDEF family.

The protein localises to the cytoplasm. It catalyses the reaction UDP-N-acetyl-alpha-D-muramoyl-L-alanine + D-glutamate + ATP = UDP-N-acetyl-alpha-D-muramoyl-L-alanyl-D-glutamate + ADP + phosphate + H(+). The protein operates within cell wall biogenesis; peptidoglycan biosynthesis. In terms of biological role, cell wall formation. Catalyzes the addition of glutamate to the nucleotide precursor UDP-N-acetylmuramoyl-L-alanine (UMA). This is UDP-N-acetylmuramoylalanine--D-glutamate ligase from Bacteroides fragilis (strain ATCC 25285 / DSM 2151 / CCUG 4856 / JCM 11019 / LMG 10263 / NCTC 9343 / Onslow / VPI 2553 / EN-2).